The primary structure comprises 141 residues: 3-hydroxyacyl-[acyl-carrier-protein] dehydratase FabZ (141 aa).

H49 is an active-site residue.

This sequence belongs to the thioester dehydratase family. FabZ subfamily.

Its subcellular location is the cytoplasm. It catalyses the reaction a (3R)-hydroxyacyl-[ACP] = a (2E)-enoyl-[ACP] + H2O. Functionally, involved in unsaturated fatty acids biosynthesis. Catalyzes the dehydration of short chain beta-hydroxyacyl-ACPs and long chain saturated and unsaturated beta-hydroxyacyl-ACPs. The chain is 3-hydroxyacyl-[acyl-carrier-protein] dehydratase FabZ from Fusobacterium nucleatum subsp. nucleatum (strain ATCC 25586 / DSM 15643 / BCRC 10681 / CIP 101130 / JCM 8532 / KCTC 2640 / LMG 13131 / VPI 4355).